We begin with the raw amino-acid sequence, 278 residues long: Proline-rich 28 kDa antigen homolog (278 aa).

The first 28 residues, 1-28, serve as a signal peptide directing secretion; that stretch reads MIQSTQTWRVLAGGLAATAMGVTVFAGG.

To M.tuberculosis Rv0040c.

This Mycobacterium leprae (strain TN) protein is Proline-rich 28 kDa antigen homolog.